A 366-amino-acid polypeptide reads, in one-letter code: Phospho-N-acetylmuramoyl-pentapeptide-transferase (366 aa).

10 helical membrane-spanning segments follow: residues Gly27–Leu47, Pro76–Ile96, Phe101–Phe121, Ile136–Pro156, Ile176–Ala196, Gly205–Ser225, Gly241–Trp261, Cys264–Gly284, Val285–Ile305, and Ala343–Leu363.

This sequence belongs to the glycosyltransferase 4 family. MraY subfamily. It depends on Mg(2+) as a cofactor.

The protein resides in the cell inner membrane. It catalyses the reaction UDP-N-acetyl-alpha-D-muramoyl-L-alanyl-gamma-D-glutamyl-meso-2,6-diaminopimeloyl-D-alanyl-D-alanine + di-trans,octa-cis-undecaprenyl phosphate = di-trans,octa-cis-undecaprenyl diphospho-N-acetyl-alpha-D-muramoyl-L-alanyl-D-glutamyl-meso-2,6-diaminopimeloyl-D-alanyl-D-alanine + UMP. Its pathway is cell wall biogenesis; peptidoglycan biosynthesis. Catalyzes the initial step of the lipid cycle reactions in the biosynthesis of the cell wall peptidoglycan: transfers peptidoglycan precursor phospho-MurNAc-pentapeptide from UDP-MurNAc-pentapeptide onto the lipid carrier undecaprenyl phosphate, yielding undecaprenyl-pyrophosphoryl-MurNAc-pentapeptide, known as lipid I. The chain is Phospho-N-acetylmuramoyl-pentapeptide-transferase from Methylacidiphilum infernorum (isolate V4) (Methylokorus infernorum (strain V4)).